The following is an 86-amino-acid chain: Large ribosomal subunit protein bL27 (86 aa).

The interval 1-23 is disordered; the sequence is MAHKKAGGSTRNGRDSESKRLGV.

It belongs to the bacterial ribosomal protein bL27 family.

In Alkalilimnicola ehrlichii (strain ATCC BAA-1101 / DSM 17681 / MLHE-1), this protein is Large ribosomal subunit protein bL27.